Here is a 24-residue protein sequence, read N- to C-terminus: Humanin-like 11 (24 aa).

It belongs to the humanin family.

It is found in the secreted. The protein resides in the cytoplasm. Its function is as follows. Plays a role as a neuroprotective and antiapoptotic factor. This Homo sapiens (Human) protein is Humanin-like 11.